The chain runs to 65 residues: Large ribosomal subunit protein uL29 (65 aa).

It belongs to the universal ribosomal protein uL29 family.

In Desulforamulus reducens (strain ATCC BAA-1160 / DSM 100696 / MI-1) (Desulfotomaculum reducens), this protein is Large ribosomal subunit protein uL29.